The following is a 419-amino-acid chain: eIF5-mimic protein 2 (419 aa).

Position 1 is an N-acetylmethionine (methionine 1). A compositionally biased stretch (polar residues) spans 1–15; it reads MNNQKQQKPTLSGQR. The disordered stretch occupies residues 1-26; the sequence is MNNQKQQKPTLSGQRFKTRKRDEKER. Serine 12 carries the post-translational modification Phosphoserine. In terms of domain architecture, W2 spans 247–414; that stretch reads NQQTIGARKE…KNAEEESESE (168 aa). A Glycyl lysine isopeptide (Lys-Gly) (interchain with G-Cter in SUMO2) cross-link involves residue lysine 368. 2 positions are modified to phosphoserine: serine 411 and serine 413.

Belongs to the BZW family.

Translation initiation regulator which represses repeat-associated non-AUG (RAN) initiated translation probably by acting as a competitive inhibitor of eukaryotic translation initiation factor 5 (EIF5) function. Enhances histone H4 gene transcription but does not seem to bind DNA directly. This Homo sapiens (Human) protein is eIF5-mimic protein 2 (BZW1).